A 268-amino-acid polypeptide reads, in one-letter code: Trans-aconitate 2-methyltransferase (268 aa).

This sequence belongs to the methyltransferase superfamily. Tam family.

The protein resides in the cytoplasm. The enzyme catalyses trans-aconitate + S-adenosyl-L-methionine = (E)-3-(methoxycarbonyl)pent-2-enedioate + S-adenosyl-L-homocysteine. In terms of biological role, catalyzes the S-adenosylmethionine monomethyl esterification of trans-aconitate. The polypeptide is Trans-aconitate 2-methyltransferase (Delftia acidovorans (strain DSM 14801 / SPH-1)).